We begin with the raw amino-acid sequence, 159 residues long: Endoribonuclease YbeY (159 aa).

Zn(2+) is bound by residues His-120, His-124, and His-130.

The protein belongs to the endoribonuclease YbeY family. Zn(2+) serves as cofactor.

It is found in the cytoplasm. Functionally, single strand-specific metallo-endoribonuclease involved in late-stage 70S ribosome quality control and in maturation of the 3' terminus of the 16S rRNA. In Parafrankia sp. (strain EAN1pec), this protein is Endoribonuclease YbeY.